A 343-amino-acid chain; its full sequence is 4-hydroxy-2-oxovalerate aldolase (343 aa).

The Pyruvate carboxyltransferase domain occupies 4 to 254 (PRLTDTTLRD…NPGLDVFGLM (251 aa)). Substrate is bound at residue 12–13 (RD). A Mn(2+)-binding site is contributed by D13. H16 (proton acceptor) is an active-site residue. The substrate site is built by S166 and H193. Residues H193 and H195 each coordinate Mn(2+). Y284 serves as a coordination point for substrate.

Belongs to the 4-hydroxy-2-oxovalerate aldolase family.

It catalyses the reaction (S)-4-hydroxy-2-oxopentanoate = acetaldehyde + pyruvate. This is 4-hydroxy-2-oxovalerate aldolase from Chloroflexus aggregans (strain MD-66 / DSM 9485).